Here is a 77-residue protein sequence, read N- to C-terminus: Acyl carrier protein (77 aa).

Residues 3–77 form the Carrier domain; that stretch reads QEIFEKVKKI…GKAVEHIESK (75 aa). S38 is modified (O-(pantetheine 4'-phosphoryl)serine).

Belongs to the acyl carrier protein (ACP) family. 4'-phosphopantetheine is transferred from CoA to a specific serine of apo-ACP by AcpS. This modification is essential for activity because fatty acids are bound in thioester linkage to the sulfhydryl of the prosthetic group.

The protein localises to the cytoplasm. It functions in the pathway lipid metabolism; fatty acid biosynthesis. In terms of biological role, carrier of the growing fatty acid chain in fatty acid biosynthesis. The chain is Acyl carrier protein from Synechocystis sp. (strain ATCC 27184 / PCC 6803 / Kazusa).